The primary structure comprises 314 residues: 4-hydroxyproline 2-epimerase (314 aa).

Residue C88 is the Proton acceptor of the active site. Substrate-binding positions include 89–90, H208, and D232; that span reads GH. The active-site Proton donor is the C236. 237-238 lines the substrate pocket; it reads GT.

This sequence belongs to the proline racemase family. As to quaternary structure, homodimer.

The enzyme catalyses trans-4-hydroxy-L-proline = cis-4-hydroxy-D-proline. Its activity is regulated as follows. Inhibited by iodoacetate, iodoacetamide and by high amounts (10 mM) of pyrrole-2-carboxylate (PYC). Not inhibited by PYC at 1 mM. Functionally, allows intracellular utilization of 4-hydroxyproline, one of the major constituents of host collagen, by converting trans-4-hydroxy-L-proline (t4LHyp) to cis-4-hydroxy-D-proline (c4DHyp), which can be further metabolized by intracellular 4-hydroxy-D-proline oxidases. Strong B-cell mitogen. Plays an important role in the regulation of intra- and extracellular amino acid pools, allowing the bacterium to profit from host precursors and enzymatic pathways. Cannot use L-proline, trans-3-hydroxy-L-proline (t3LHyp) and pyrrolidone-5-carboxylate (P5C) as substrate. This is 4-hydroxyproline 2-epimerase from Pseudomonas aeruginosa (strain ATCC 15692 / DSM 22644 / CIP 104116 / JCM 14847 / LMG 12228 / 1C / PRS 101 / PAO1).